A 372-amino-acid chain; its full sequence is Cyclin-dependent kinase 9 (372 aa).

The region spanning Tyr19–Phe315 is the Protein kinase domain. Residues Ile25 to Val33 and Lys48 contribute to the ATP site. Asp149 functions as the Proton acceptor in the catalytic mechanism. A disordered region spans residues Pro341–Phe372. The span at Gln352 to Thr366 shows a compositional bias: polar residues.

The protein belongs to the protein kinase superfamily. CMGC Ser/Thr protein kinase family. CDC2/CDKX subfamily. In terms of assembly, associates with cyclin-T to form P-TEFb. Also associates with cyclin-K.

The protein resides in the nucleus. It catalyses the reaction L-seryl-[protein] + ATP = O-phospho-L-seryl-[protein] + ADP + H(+). The enzyme catalyses L-threonyl-[protein] + ATP = O-phospho-L-threonyl-[protein] + ADP + H(+). It carries out the reaction [DNA-directed RNA polymerase] + ATP = phospho-[DNA-directed RNA polymerase] + ADP + H(+). In terms of biological role, member of the cyclin-dependent kinase pair (CDK9/cyclin-T) complex, also called positive transcription elongation factor b (P-TEFb), which facilitates the transition from abortive to production elongation by phosphorylating the CTD (C-terminal domain) of the large subunit of RNA polymerase II (RNAP II), SUPT5H and RDBP. The CDK9/cyclin-K complex also has a kinase activity toward CTD of RNAP II and can substitute for P-TEFb in vitro. The protein is Cyclin-dependent kinase 9 (CDK9) of Gallus gallus (Chicken).